Here is a 1400-residue protein sequence, read N- to C-terminus: S phase cyclin A-associated protein in the endoplasmic reticulum (1400 aa).

4 disordered regions span residues 36-61 (ESKDDDGKPKCQTGGKSKRTIQGTHK), 226-277 (VKAH…IRSR), 517-550 (PARPPGHGIHMHEKLSSPSRKRTIAESKKKHEEK), and 701-723 (RIEQQRQEKEKAREDAARERARD). Residues 231–243 (TGSTASSEITPAQ) are compositionally biased toward polar residues. Over residues 539-550 (TIAESKKKHEEK) the composition is skewed to basic and acidic residues. The C2H2-type zinc finger occupies 792-816 (KQCSLCNVLISSEVYLFSHVKGRKH). Position 832 is a phosphoserine (serine 832).

Interacts with CCNA2/CDK2 complex, but not with CCNA2/CDC2, CCNB1/CDC2 or CCNE1/CDK2 complexes, at multiple phases of the cell cycle, including S and G2/M. In terms of processing, phosphorylated in vitro by the CCNA2/CDK2 complex. As to expression, widely expressed with high expression in testis. Isoform 1 is detected in various tissues, including retina, fetal and adult brain. Isoform 2 is expressed in the retina at high levels, and in the brain at very low levels.

Its subcellular location is the endoplasmic reticulum. The protein resides in the nucleus. Functionally, CCNA2/CDK2 regulatory protein that transiently maintains CCNA2 in the cytoplasm. The polypeptide is S phase cyclin A-associated protein in the endoplasmic reticulum (Homo sapiens (Human)).